A 144-amino-acid chain; its full sequence is MNAYEAYMNELATQMRSELTGRDFKSLETADEVSNFMTNVGSDDTTFVVINSTCGCAAGLARPAAVTVVEQNDKKPTNKVTVFAGQDKEATATMRDYIQQVPSSPSYALFKGQELKHFIPREHIEGRDIQDICMDIKDAFDDYC.

The protein belongs to the bacilliredoxin family.

This is Bacilliredoxin SSP1311 from Staphylococcus saprophyticus subsp. saprophyticus (strain ATCC 15305 / DSM 20229 / NCIMB 8711 / NCTC 7292 / S-41).